Here is a 124-residue protein sequence, read N- to C-terminus: Fluoride-specific ion channel FluC 2 (124 aa).

A run of 4 helical transmembrane segments spans residues 9–29, 34–54, 67–87, and 99–119; these read LGIFLAAMLGGLVRYLVSTWL, DFPWGTLFVNYLGIFCLIFLV, LILALGTGFCGGLTTFSSLML, and FSLVLYLLLSIGGGLLLAYFL. Positions 77 and 80 each coordinate Na(+).

It belongs to the fluoride channel Fluc/FEX (TC 1.A.43) family.

Its subcellular location is the cell membrane. The catalysed reaction is fluoride(in) = fluoride(out). Na(+) is not transported, but it plays an essential structural role and its presence is essential for fluoride channel function. In terms of biological role, fluoride-specific ion channel. Important for reducing fluoride concentration in the cell, thus reducing its toxicity. The chain is Fluoride-specific ion channel FluC 2 from Streptococcus pneumoniae (strain ATCC BAA-255 / R6).